The sequence spans 1077 residues: Bifunctional helicase and thymine dioxygenase JBP2 (1077 aa).

The thymine dioxygenase stretch occupies residues M1–A516. Residues H391, D393, and H441 each coordinate Fe cation. R455 is a 2-oxoglutarate binding site. The segment at K517 to R1075 is DNA Helicase. The Helicase ATP-binding domain maps to S531–K706. Residue L544–T551 coordinates ATP. The short motif at D657–H660 is the DEAH box element. The Helicase C-terminal domain maps to K871–D1032.

This sequence in the C-terminal section; belongs to the SNF2/RAD54 helicase family. The protein in the N-terminal section; belongs to the TET family. JBP2 subfamily. Requires Fe(2+) as cofactor.

Its subcellular location is the nucleus. It catalyses the reaction ATP + H2O = ADP + phosphate + H(+). It carries out the reaction thymine + 2-oxoglutarate + O2 = 5-hydroxymethyluracil + succinate + CO2. Functionally, dioxygenase that catalyzes the first step of DNA base J (beta-d-glucosyl-HOMedU) biosynthesis by converting thymine to 5-hydroxymethyluracil (HOMedU). DNA base J is a hypermodified thymidine residue found in the genome of kinetoplastid parasites, which is localized primarily to repetitive DNA, namely the telomeres, and is implicated in the regulation of antigenic variation. Probably also acts as a DNA helicase. Recognizes and binds specific regions of the genome, hydrolyzes ATP and allows the DNA base J de novo synthesis. Involved in initial synthesis of DNA base J, JBP1 being able to act via the basal level of DNA base J and propagate further synthesis. In contrast to JBP1, it does not specifically bind DNA base J, however it binds chromatin. The chain is Bifunctional helicase and thymine dioxygenase JBP2 (JBP2) from Trypanosoma brucei brucei (strain 927/4 GUTat10.1).